Reading from the N-terminus, the 253-residue chain is DNA repair protein RecO (253 aa).

It belongs to the RecO family.

Involved in DNA repair and RecF pathway recombination. This chain is DNA repair protein RecO, found in Streptococcus agalactiae serotype Ia (strain ATCC 27591 / A909 / CDC SS700).